The following is a 1003-amino-acid chain: Rho-associated protein kinase 1 (1003 aa).

The interval 1–28 (VAPVVPDLSSDIDTSNFDDLEEDKGEEE) is disordered. One can recognise an AGC-kinase C-terminal domain in the interval 1–58 (VAPVVPDLSSDIDTSNFDDLEEDKGEEETFPIPKAFVGNQLPFVGFTYYSNRRYLSSA). Residues 16-28 (NFDDLEEDKGEEE) show a composition bias toward acidic residues. The interaction with FHOD1 stretch occupies residues 17 to 376 (FDDLEEDKGE…KKLKEEREAR (360 aa)). The stretch at 71 to 341 (KSLQESLQKT…RLEQEVNEHK (271 aa)) forms a coiled coil. An REM-1 domain is found at 128-205 (STVSQIEKEK…LEEANDLLRT (78 aa)). The residue at position 296 (K296) is an N6-acetyllysine. The segment at 356–595 (EAKSVAMCEM…TVSRLEEANS (240 aa)) is SHROOM3 binding. One can recognise a RhoBD domain in the interval 598–664 (TKDIEILRRE…LAEIMNRKDF (67 aa)). Residues 647-659 (LKTQAVNKLAEIM) form an RHOA binding region. Residues 660–751 (NRKDFKIDRK…KLLDLSDSTS (92 aa)) adopt a coiled-coil conformation. Residues S754 and S757 each carry the phosphoserine modification. Positions 764–1003 (NLPESRIEGW…VVKNTSGKTR (240 aa)) are auto-inhibitory. The region spanning 767-966 (ESRIEGWLSV…WVTHLVKKIP (200 aa)) is the PH domain. The segment at 877–930 (GHEFIPTLYHFPANCDACAKPLWHVFKPPPALECRRCHVKCHRDHLDKKEDLIC) adopts a Phorbol-ester/DAG-type zinc-finger fold. The tract at residues 968–1003 (NPPSGFVRASPRTLSTRSTANQSFRKVVKNTSGKTR) is disordered. The residue at position 977 (S977) is a Phosphoserine. Positions 979–1003 (RTLSTRSTANQSFRKVVKNTSGKTR) are enriched in polar residues.

The protein belongs to the protein kinase superfamily. AGC Ser/Thr protein kinase family. Homodimer. Interacts with RHOA (activated by GTP), RHOB, RHOC, GEM, MYLC2B, RHOE, PPP1R12A, LIMK1, LIMK2, TSG101, CHORDC1, DAPK3, PFN1, PTEN and JIP3. Interacts with ITGB1BP1 (via N-terminus and PTB domain). Interacts with FHOD1 in a Src-dependent manner. Interacts with SHROOM3. Mg(2+) serves as cofactor. Post-translationally, autophosphorylated on serine and threonine residues. In terms of processing, cleaved by caspase-3 during apoptosis. This leads to constitutive activation of the kinase and membrane blebbing.

The protein localises to the cytoplasm. The protein resides in the cytoskeleton. It localises to the microtubule organizing center. It is found in the centrosome. Its subcellular location is the centriole. The protein localises to the golgi apparatus membrane. The protein resides in the cell projection. It localises to the bleb. It is found in the cell membrane. Its subcellular location is the lamellipodium. The protein localises to the ruffle. The catalysed reaction is L-seryl-[protein] + ATP = O-phospho-L-seryl-[protein] + ADP + H(+). It catalyses the reaction L-threonyl-[protein] + ATP = O-phospho-L-threonyl-[protein] + ADP + H(+). With respect to regulation, activated by RHOA binding. Inhibited by Y-27632. Functionally, protein kinase which is a key regulator of actin cytoskeleton and cell polarity. Involved in regulation of smooth muscle contraction, actin cytoskeleton organization, stress fiber and focal adhesion formation, neurite retraction, cell adhesion and motility via phosphorylation of DAPK3, GFAP, LIMK1, LIMK2, MYL9/MLC2, TPPP, PFN1 and PPP1R12A. Phosphorylates FHOD1 and acts synergistically with it to promote SRC-dependent non-apoptotic plasma membrane blebbing. Phosphorylates JIP3 and regulates the recruitment of JNK to JIP3 upon UVB-induced stress. Acts as a suppressor of inflammatory cell migration by regulating PTEN phosphorylation and stability. Acts as a negative regulator of VEGF-induced angiogenic endothelial cell activation. Required for centrosome positioning and centrosome-dependent exit from mitosis. Plays a role in terminal erythroid differentiation. May regulate closure of the eyelids and ventral body wall by inducing the assembly of actomyosin bundles. Promotes keratinocyte terminal differentiation. Involved in osteoblast compaction through the fibronectin fibrillogenesis cell-mediated matrix assembly process, essential for osteoblast mineralization. The protein is Rho-associated protein kinase 1 (ROCK1) of Pan troglodytes (Chimpanzee).